The primary structure comprises 208 residues: NAD(P)H-quinone oxidoreductase subunit I (208 aa).

4Fe-4S ferredoxin-type domains lie at 55-84 (GRIH…VDWV) and 95-124 (RNYS…MTEE). [4Fe-4S] cluster-binding residues include Cys64, Cys67, Cys70, Cys74, Cys104, Cys107, Cys110, and Cys114.

This sequence belongs to the complex I 23 kDa subunit family. In terms of assembly, NDH-1 is composed of at least 11 different subunits. [4Fe-4S] cluster is required as a cofactor.

The protein localises to the cellular thylakoid membrane. It carries out the reaction a plastoquinone + NADH + (n+1) H(+)(in) = a plastoquinol + NAD(+) + n H(+)(out). The enzyme catalyses a plastoquinone + NADPH + (n+1) H(+)(in) = a plastoquinol + NADP(+) + n H(+)(out). Its function is as follows. NDH-1 shuttles electrons from an unknown electron donor, via FMN and iron-sulfur (Fe-S) centers, to quinones in the respiratory and/or the photosynthetic chain. The immediate electron acceptor for the enzyme in this species is believed to be plastoquinone. Couples the redox reaction to proton translocation, and thus conserves the redox energy in a proton gradient. This chain is NAD(P)H-quinone oxidoreductase subunit I, found in Prochlorococcus marinus (strain MIT 9301).